The chain runs to 315 residues: MLSVNELALEIFENLAEFAEEFNAAYHELGNGARIVDCGVSTRGGYSAGRAFTEICMGGLGEVNFRMGEISGIPMPFIDVNTDFPSISCLGAQKAGWTVKVGNYFAMGSGPARALALKPKHTYEVIGYEDDFDSAVIALESDHLPNGEVMEKIAAECHVDVGNVCAVVAPTASPVGSIQVSGRCVETAIYKLNELGFDTTKIISAIGSAPIPPVKKDATRAMGCTNDATIYHGRILLTMKAPEIKDYLDKIPSNKSKGYGKPFYDIFKEAEFDFYKIDTSLFSPAEVIINELTEGVVYHVGAVNPEVTLKSFGLL.

It belongs to the MCH family.

It localises to the cytoplasm. It carries out the reaction 5,10-methenyl-5,6,7,8-tetrahydromethanopterin + H2O = N(5)-formyl-5,6,7,8-tetrahydromethanopterin + H(+). Its pathway is one-carbon metabolism; methanogenesis from CO(2); 5,10-methenyl-5,6,7,8-tetrahydromethanopterin from CO(2): step 3/3. Catalyzes the reversible interconversion of 5-formyl-H(4)MPT to methenyl-H(4)MPT(+). This Methanosphaerula palustris (strain ATCC BAA-1556 / DSM 19958 / E1-9c) protein is Methenyltetrahydromethanopterin cyclohydrolase.